We begin with the raw amino-acid sequence, 460 residues long: MAAAPGGSAPPAGPSPRLAFSTADSGGGMSGLNPGPAVPMKDHDAIKLFVGQIPRGLDEQDLKPLFEEFGRIYELTVLKDRLTGLHKGCAFLTYCARDSALKAQSALHEQKTLPGMNRPIQVKPAASEGRGEDRKLFVGMLGKQQGEEDVRRLFQPFGHIEECTVLRSPDGTSKGCAFVKFGSQGEAQAAIQGLHGSRTMTGASSSLVVKLADTDRERALRRMQQMAGQLGAFHPAPLPLGACGAYTTAILQHQAALLAAAQGPGLGQVAAVAAQMQHVAAFSLVAAPLLPAAANTSPGGNGPGALPGLPAPMGVNGFGSLTPQSNGQPGSDTLYNNGVSPYPAAYPSAYAPASTAFSQQPSALPQQQREGPEGCNLFIYHLPQEFGDAELIQTFLPFGAVVSAKVFVDRATNQSKCFGFVSFDNPTSAQTAIQAMNGFQIGMKRLKVQLKRPKDANRPY.

A compositionally biased stretch (low complexity) spans 1–10 (MAAAPGGSAP). The segment at 1 to 37 (MAAAPGGSAPPAGPSPRLAFSTADSGGGMSGLNPGPA) is disordered. RRM domains lie at 46 to 127 (IKLF…PAAS) and 134 to 214 (RKLF…LADT). The tract at residues 316–336 (NGFGSLTPQSNGQPGSDTLYN) is disordered. Residues 319-336 (GSLTPQSNGQPGSDTLYN) are compositionally biased toward polar residues. The RRM 3 domain occupies 375 to 453 (CNLFIYHLPQ…KRLKVQLKRP (79 aa)).

Belongs to the CELF/BRUNOL family.

Its subcellular location is the nucleus. It localises to the cytoplasm. RNA-binding protein implicated in the regulation of pre-mRNA alternative splicing. Mediates exon inclusion and/or exclusion in pre-mRNA that are subject to tissue-specific and developmentally regulated alternative splicing. Specifically activates exon 5 inclusion of TNNT2 in a muscle-specific splicing enhancer (MSE)-dependent manner. Promotes also exon exclusion of INSR pre-mRNA. The sequence is that of CUGBP Elav-like family member 6 (Celf6) from Mus musculus (Mouse).